The primary structure comprises 224 residues: Fibronectin type III domain-containing protein 9 (224 aa).

The region spanning 1-101 is the Fibronectin type-III domain; that stretch reads MNIEVGNISY…FHTLDKSPLA (101 aa). The helical transmembrane segment at 113 to 133 threads the bilayer; sequence LWVLMAILLACFTAVLAFICL. The segment at 175-224 is disordered; the sequence is LQGLPLVEMPRKNSRDGAELDPEANQDAPDAGALQRGGGDPPAILPHCGE. Positions 183–192 are enriched in basic and acidic residues; that stretch reads MPRKNSRDGA.

It localises to the membrane. The chain is Fibronectin type III domain-containing protein 9 (FNDC9) from Homo sapiens (Human).